The following is a 210-amino-acid chain: Large ribosomal subunit protein uL3 (210 aa).

Belongs to the universal ribosomal protein uL3 family. As to quaternary structure, part of the 50S ribosomal subunit. Forms a cluster with proteins L14 and L19.

In terms of biological role, one of the primary rRNA binding proteins, it binds directly near the 3'-end of the 23S rRNA, where it nucleates assembly of the 50S subunit. This chain is Large ribosomal subunit protein uL3, found in Natranaerobius thermophilus (strain ATCC BAA-1301 / DSM 18059 / JW/NM-WN-LF).